Reading from the N-terminus, the 184-residue chain is Phosphopantetheine adenylyltransferase (184 aa).

Ser8 provides a ligand contact to substrate. ATP-binding positions include Ser8–Phe9 and His16. Residues Lys40, Leu74, and Arg88 each coordinate substrate. ATP-binding positions include Gly89–Arg91, Glu99, and Trp123–Thr129.

It belongs to the bacterial CoaD family. Homohexamer. Mg(2+) serves as cofactor.

The protein localises to the cytoplasm. It carries out the reaction (R)-4'-phosphopantetheine + ATP + H(+) = 3'-dephospho-CoA + diphosphate. It functions in the pathway cofactor biosynthesis; coenzyme A biosynthesis; CoA from (R)-pantothenate: step 4/5. Functionally, reversibly transfers an adenylyl group from ATP to 4'-phosphopantetheine, yielding dephospho-CoA (dPCoA) and pyrophosphate. The chain is Phosphopantetheine adenylyltransferase from Deinococcus geothermalis (strain DSM 11300 / CIP 105573 / AG-3a).